A 340-amino-acid polypeptide reads, in one-letter code: Guanine nucleotide-binding protein G(I)/G(S)/G(T) subunit beta-1 (340 aa).

Ser2 carries the post-translational modification N-acetylserine. Ser2 is modified (phosphoserine). WD repeat units follow at residues 46–94 (RTRR…HAIP), 95–140 (LRSS…RELA), 141–181 (GHTG…TTFT), 182–223 (GHTG…QTFT), 224–267 (GHES…YSHD), 268–309 (NIIC…GVLA), and 310–340 (GHDD…KIWN). At His266 the chain carries Phosphohistidine.

Belongs to the WD repeat G protein beta family. As to quaternary structure, g proteins are composed of 3 units, alpha, beta and gamma. The heterodimer formed by GNB1 and GNG2 interacts with ARHGEF5. The heterodimer formed by GNB1 and GNG2 interacts with GRK2. Forms a complex with GNAO1 and GNG3. Interacts with ARHGEF18 and RASD2. Forms complexes with TAS2R14 and G-proteins; these complexes play a role in the perception of bitterness. Component of the TAS2R14-GNAI1 complex, consisting of TAS2R14, GNAI1, GNB1 and GNG2. Component of the TAS2R14-GNAT3 complex, consisting of TAS2R14, GNAT3, GNB1 and GNG2. Component of the TAS2R14-GNAS2 complex, consisting of TAS2R14, GNAS2, GNB1 and GNG2. Phosphorylation at His-266 by NDKB contributes to G protein activation by increasing the high energetic phosphate transfer onto GDP.

Functionally, guanine nucleotide-binding proteins (G proteins) are involved as a modulator or transducer in various transmembrane signaling systems. The beta and gamma chains are required for the GTPase activity, for replacement of GDP by GTP, and for G protein-effector interaction. This is Guanine nucleotide-binding protein G(I)/G(S)/G(T) subunit beta-1 (GNB1) from Pongo abelii (Sumatran orangutan).